The primary structure comprises 130 residues: Nascent polypeptide-associated complex protein (130 aa).

The NAC-A/B domain maps to 6–74; the sequence is GMNPRKMQQM…PVERDAADAI (69 aa). Residues 65–91 are disordered; that stretch reads PVERDAADAIEAAPADDSDDTDDDDAI. Acidic residues predominate over residues 78 to 90; it reads PADDSDDTDDDDA.

This sequence belongs to the NAC-alpha family. In terms of assembly, homodimer. Interacts with the ribosome. Binds ribosomal RNA.

In terms of biological role, contacts the emerging nascent chain on the ribosome. The chain is Nascent polypeptide-associated complex protein from Halobacterium salinarum (strain ATCC 700922 / JCM 11081 / NRC-1) (Halobacterium halobium).